The chain runs to 305 residues: MSKRDILSVLDMEKDLSEIIDLSIELKKNRYRSYESLRNKVLGLIFEKPSTRTRTSLEVAIDQLGGHAVYLNPSEMQLGRGETISDTGHVLSRFLDAIAYRAYDHRNVVELARSTSIPVINALDDVEHPLQIVADFMTIKEKKGRFTNLKFSYIGDGNNMANSLMLGAAILGTDMYVASPKGFEPKQEFVEKARSIAKQHGSSITITNDPVEAARDADVIYTDVWISMGEESKKGEKEKAFKDFQINEKLVSNAKRDYIFMHCLPAHRGLEVTDGVADSINSVIFDEAENRLHSEKGVLYKLLSY.

Carbamoyl phosphate is bound by residues 50–53, Gln-77, Arg-101, and 128–131; these read STRT and HPLQ. L-ornithine-binding positions include Asn-159, Asp-223, and 227–228; that span reads SM. Carbamoyl phosphate-binding positions include 263–264 and Arg-291; that span reads CL.

Belongs to the aspartate/ornithine carbamoyltransferase superfamily. OTCase family.

It is found in the cytoplasm. It carries out the reaction carbamoyl phosphate + L-ornithine = L-citrulline + phosphate + H(+). It functions in the pathway amino-acid degradation; L-arginine degradation via ADI pathway; carbamoyl phosphate from L-arginine: step 2/2. In terms of biological role, reversibly catalyzes the transfer of the carbamoyl group from carbamoyl phosphate (CP) to the N(epsilon) atom of ornithine (ORN) to produce L-citrulline. This chain is Ornithine carbamoyltransferase, catabolic, found in Thermoplasma acidophilum (strain ATCC 25905 / DSM 1728 / JCM 9062 / NBRC 15155 / AMRC-C165).